An 86-amino-acid polypeptide reads, in one-letter code: Small ribosomal subunit protein uS17 (86 aa).

The protein belongs to the universal ribosomal protein uS17 family. In terms of assembly, part of the 30S ribosomal subunit.

Its function is as follows. One of the primary rRNA binding proteins, it binds specifically to the 5'-end of 16S ribosomal RNA. The protein is Small ribosomal subunit protein uS17 of Desulfotalea psychrophila (strain LSv54 / DSM 12343).